A 718-amino-acid chain; its full sequence is Phenylalanine--tRNA ligase beta subunit (718 aa).

In terms of domain architecture, tRNA-binding spans 39 to 153 (LNEISGIKFG…IFDLESNPLK (115 aa)). Positions 386-460 (SKKTFLDLNY…RFYGLEKLKD (75 aa)) constitute a B5 domain. 3 residues coordinate Mg(2+): Asp-438, Asp-444, and Asp-448.

Belongs to the phenylalanyl-tRNA synthetase beta subunit family. Type 1 subfamily. Tetramer of two alpha and two beta subunits. It depends on Mg(2+) as a cofactor.

Its subcellular location is the cytoplasm. It catalyses the reaction tRNA(Phe) + L-phenylalanine + ATP = L-phenylalanyl-tRNA(Phe) + AMP + diphosphate + H(+). The protein is Phenylalanine--tRNA ligase beta subunit of Mesomycoplasma hyopneumoniae (strain J / ATCC 25934 / NCTC 10110) (Mycoplasma hyopneumoniae).